Here is a 432-residue protein sequence, read N- to C-terminus: Adenylosuccinate synthetase (432 aa).

Residues 13–19 (GDEGKGK) and 41–43 (GHT) contribute to the GTP site. The active-site Proton acceptor is the Asp-14. Mg(2+) is bound by residues Asp-14 and Gly-41. Residues 14–17 (DEGK), 39–42 (NAGH), Thr-130, Arg-144, Gln-225, Thr-240, and Arg-304 each bind IMP. The active-site Proton donor is His-42. 300 to 306 (AVTGRPR) is a substrate binding site. GTP-binding positions include Arg-306, 332 to 334 (KLD), and 415 to 417 (STG).

It belongs to the adenylosuccinate synthetase family. As to quaternary structure, homodimer. Mg(2+) is required as a cofactor.

The protein localises to the cytoplasm. It carries out the reaction IMP + L-aspartate + GTP = N(6)-(1,2-dicarboxyethyl)-AMP + GDP + phosphate + 2 H(+). The protein operates within purine metabolism; AMP biosynthesis via de novo pathway; AMP from IMP: step 1/2. In terms of biological role, plays an important role in the de novo pathway of purine nucleotide biosynthesis. Catalyzes the first committed step in the biosynthesis of AMP from IMP. This is Adenylosuccinate synthetase from Haemophilus influenzae (strain 86-028NP).